A 1345-amino-acid chain; its full sequence is Rho guanine nucleotide exchange factor 10 (1345 aa).

Disordered regions lie at residues 1 to 84 (MEQG…PAKL) and 99 to 120 (TPLQEDQPSSPDANTEEEGVGL). Positions 22–39 (NNEEEGELFDFDSGDEVP) are enriched in acidic residues. A compositionally biased stretch (basic and acidic residues) spans 40 to 54 (EADRQVPSADDRTRG). The segment covering 102 to 111 (QEDQPSSPDA) has biased composition (polar residues). S157 is modified (phosphoserine). 2 disordered regions span residues 158-195 (VEEEEAAETVGDGQCNSLSSEDLPHSSEQGSQEGSALA) and 207-273 (MENP…IPRS). Polar residues predominate over residues 171-191 (QCNSLSSEDLPHSSEQGSQEG). Positions 224–239 (DSEPDEMIYDDVENGE) are enriched in acidic residues. Low complexity predominate over residues 242–255 (GNSSPEYGWSSSEF). Residues 307 to 335 (GAMEIQQAKQRQERKMQKLMKAAKEGTKD) are a coiled coil. S355 carries the phosphoserine modification. Residues 397 to 584 (VRRYILGSIV…ETLAEKLNER (188 aa)) form the DH domain. Disordered regions lie at residues 1202-1237 (DRARDSPRSGSELQDEDPKDLLCSEEGPSCPGQPDT) and 1253-1306 (KNDL…RASS). Residues 1256-1271 (LSSSSGSLNLSHGSSS) are compositionally biased toward low complexity. S1262 carries the phosphoserine modification. An N5-methylglutamine modification is found at Q1314.

Post-translationally, methylated at Gln-1314 by N6AMT1. In terms of tissue distribution, ubiquitously expressed.

In terms of biological role, may play a role in developmental myelination of peripheral nerves. In Mus musculus (Mouse), this protein is Rho guanine nucleotide exchange factor 10 (Arhgef10).